Reading from the N-terminus, the 231-residue chain is Claudin-10 (231 aa).

The chain crosses the membrane as a helical span at residues 1 to 21; sequence MASTALEIVAFVVSISGWVLV. At 22–80 the chain is on the extracellular side; sequence SSTLPTDYWKVSTIDGTVITTATYFANLWKICVTDSTGVANCKEFPSMLALDGYIQACR. A helical membrane pass occupies residues 81–101; that stretch reads GLMIAAVSLGFFGSIFALFGM. Residues 102–115 are Cytoplasmic-facing; the sequence is KCTKVGGSDQAKAK. Residues 116–136 traverse the membrane as a helical segment; that stretch reads IACLAGIVFILSGLCSMTGCS. The Extracellular portion of the chain corresponds to 137-160; the sequence is LYANKITTEFFDPLYMEQKYELGA. Residues 161–181 traverse the membrane as a helical segment; it reads ALFIGWAGASLCIIGGVIFCF. At 182 to 231 the chain is on the cytoplasmic side; it reads SISDNNKTPRMGYTYNGPTSAMSSRTKYQGGEGDFKTTGPSKQFDKNAYV.

It belongs to the claudin family. As to quaternary structure, can form homodimers both in trans (interaction between CLDN10 molecules in opposing membranes) and in cis (interaction between CLDN10 molecules within one membrane). Interacts with CLDN19. In terms of tissue distribution, widely expressed, with highest expression detected in brain cortex, kidney and lung. In kidney, the expression is highest in medulla, with transcripts being detected in medullary thick ascending limb of Henle's loop (mTAL) and outer and inner medullary collecting ducts. Expressed in salivary glands and skin. Detected in kidney with transcripts being detected in PCT, mTAL and cortical collecting duct. Detected in uterus. Expressed in proximal tubules (at protein level). As to expression, only detected in kidney and uterus. In terms of tissue distribution, detected in kidney with transcripts being detected in PCT, mTAL and cortical collecting duct. Detected in uterus. Expressed in the inner ear where it is detected in organ of Corti, marginal cells of stria vascularis, Reissner's membrane and spiral limbus (at protein level).

Its subcellular location is the cell junction. It localises to the tight junction. It is found in the cell membrane. The protein resides in the endoplasmic reticulum. It carries out the reaction Na(+)(in) = Na(+)(out). The catalysed reaction is Li(+)(in) = Li(+)(out). The enzyme catalyses K(+)(in) = K(+)(out). It catalyses the reaction Rb(+)(in) = Rb(+)(out). It carries out the reaction Cs(+)(in) = Cs(+)(out). The catalysed reaction is NH4(+)(in) = NH4(+)(out). The enzyme catalyses methylamine(out) = methylamine(in). It catalyses the reaction Mg(2+)(in) = Mg(2+)(out). It carries out the reaction Ca(2+)(in) = Ca(2+)(out). The catalysed reaction is Sr(2+)(in) = Sr(2+)(out). The enzyme catalyses chloride(in) = chloride(out). It catalyses the reaction nitrate(in) = nitrate(out). Its function is as follows. Forms paracellular channels: polymerizes in tight junction strands with cation- and anion-selective channels through the strands, conveying epithelial permeability in a process known as paracellular tight junction permeability. Forms cation-selective paracellular channels. In sweat glands and in the thick ascending limb (TAL) of Henle's loop in kidney, it controls paracellular sodium permeability which is essential for proper sweat production and renal function. In terms of biological role, forms anion-selective paracellular channels. In renal proximal tubules, it conveys selective chloride over hydrogencarbonate anion permeability which is required for renal chloride reabsorption and salt homeostasis. This is Claudin-10 from Mus musculus (Mouse).